We begin with the raw amino-acid sequence, 31 residues long: Photosystem II reaction center protein T (31 aa).

The helical transmembrane segment at Ala3–Phe23 threads the bilayer.

It belongs to the PsbT family. In terms of assembly, PSII is composed of 1 copy each of membrane proteins PsbA, PsbB, PsbC, PsbD, PsbE, PsbF, PsbH, PsbI, PsbJ, PsbK, PsbL, PsbM, PsbT, PsbX, PsbY, PsbZ, Psb30/Ycf12, at least 3 peripheral proteins of the oxygen-evolving complex and a large number of cofactors. It forms dimeric complexes.

The protein localises to the plastid. Its subcellular location is the chloroplast thylakoid membrane. Its function is as follows. Found at the monomer-monomer interface of the photosystem II (PS II) dimer, plays a role in assembly and dimerization of PSII. PSII is a light-driven water plastoquinone oxidoreductase, using light energy to abstract electrons from H(2)O, generating a proton gradient subsequently used for ATP formation. This chain is Photosystem II reaction center protein T, found in Pyropia yezoensis (Susabi-nori).